A 588-amino-acid polypeptide reads, in one-letter code: L-fucose isomerase (588 aa).

Residues E335 and D359 each act as proton acceptor in the active site. Mn(2+)-binding residues include E335, D359, and H525.

This sequence belongs to the L-fucose isomerase family. Mn(2+) is required as a cofactor.

The protein localises to the cytoplasm. The enzyme catalyses L-fucose = L-fuculose. It functions in the pathway carbohydrate degradation; L-fucose degradation; L-lactaldehyde and glycerone phosphate from L-fucose: step 1/3. Converts the aldose L-fucose into the corresponding ketose L-fuculose. The chain is L-fucose isomerase from Streptococcus pneumoniae (strain JJA).